Consider the following 546-residue polypeptide: Intermembrane transport protein PqiB (546 aa).

Topologically, residues Met-1–Asn-15 are cytoplasmic. Residues Trp-16–Tyr-36 form a helical membrane-spanning segment. Residues His-37–Gln-546 are Periplasmic-facing. MCE/MlaD regions lie at residues Gly-42–Gly-133, Ile-158–Arg-217, and His-285–Tyr-389. The stretch at Ile-437–Ile-464 forms a coiled coil.

It belongs to the PqiB family. As to quaternary structure, homohexamer. May form a complex composed of PqiA, PqiB and PqiC. Interacts with PqiC.

It localises to the cell inner membrane. Its function is as follows. Forms a tunnel that spans the entire periplasmic space. Could be implicated in lipid transport between the inner membrane and the outer membrane. Binds phospholipids. Required for outer membrane homeostasis. Contributes to membrane integrity. In Escherichia coli (strain K12), this protein is Intermembrane transport protein PqiB.